An 827-amino-acid polypeptide reads, in one-letter code: Lon protease 2 (827 aa).

Residues 1–22 (MSDEKKKGSAASAMPTAMAPPG) are disordered. The segment covering 9–21 (SAASAMPTAMAPP) has biased composition (low complexity). One can recognise a Lon N-terminal domain in the interval 33 to 227 (LPILPLRNSV…LVLELLNRKR (195 aa)). Residue 379 to 386 (GPPGVGKT) coordinates ATP. Residues 615 to 796 (TEVPGVATGL…DDVLKAALET (182 aa)) form the Lon proteolytic domain. Residues Ser702 and Lys745 contribute to the active site. Residues 799–827 (VGVAGTPGGEPGKEAPLPKPAESAPEVRA) are disordered.

This sequence belongs to the peptidase S16 family. As to quaternary structure, homohexamer. Organized in a ring with a central cavity.

The protein localises to the cytoplasm. It catalyses the reaction Hydrolysis of proteins in presence of ATP.. Functionally, ATP-dependent serine protease that mediates the selective degradation of mutant and abnormal proteins as well as certain short-lived regulatory proteins. Required for cellular homeostasis and for survival from DNA damage and developmental changes induced by stress. Degrades polypeptides processively to yield small peptide fragments that are 5 to 10 amino acids long. Binds to DNA in a double-stranded, site-specific manner. This Myxococcus xanthus protein is Lon protease 2.